Consider the following 373-residue polypeptide: DNA replication and repair protein RecF (373 aa).

30–37 (GDNAQGKT) lines the ATP pocket.

It belongs to the RecF family.

Its subcellular location is the cytoplasm. The RecF protein is involved in DNA metabolism; it is required for DNA replication and normal SOS inducibility. RecF binds preferentially to single-stranded, linear DNA. It also seems to bind ATP. This chain is DNA replication and repair protein RecF, found in Oenococcus oeni (strain ATCC BAA-331 / PSU-1).